A 319-amino-acid chain; its full sequence is Plastid lipid-associated protein 2, chloroplastic (319 aa).

The transit peptide at Met-1–Arg-59 directs the protein to the chloroplast. Residues Gln-17–Thr-39 are disordered. The segment covering Ser-18–Ser-36 has biased composition (low complexity).

Belongs to the PAP/fibrillin family. Expressed almost exclusively in petals. Very weak expression in all other organs.

It is found in the plastid. The protein localises to the chloroplast. In terms of biological role, may stabilize the accumulated carotenoid structures. This is Plastid lipid-associated protein 2, chloroplastic (PAP2) from Brassica campestris (Field mustard).